The sequence spans 413 residues: NAD-dependent dihydropyrimidine dehydrogenase subunit PreT (413 aa).

Glu-287 contributes to the NAD(+) binding site.

It belongs to the NADH dehydrogenase family. As to quaternary structure, heterotetramer of 2 PreA and 2 PreT subunits.

The catalysed reaction is 5,6-dihydrouracil + NAD(+) = uracil + NADH + H(+). It catalyses the reaction 5,6-dihydrothymine + NAD(+) = thymine + NADH + H(+). In terms of biological role, involved in pyrimidine base degradation. Catalyzes physiologically the reduction of uracil to 5,6-dihydrouracil (DHU) by using NADH as a specific cosubstrate. It also catalyzes the reverse reaction and the reduction of thymine to 5,6-dihydrothymine (DHT). The protein is NAD-dependent dihydropyrimidine dehydrogenase subunit PreT (preT) of Salmonella typhimurium (strain LT2 / SGSC1412 / ATCC 700720).